The primary structure comprises 375 residues: Alpha-2,8-sialyltransferase 8B (375 aa).

Topologically, residues 1 to 6 (MQLQFR) are cytoplasmic. A helical; Signal-anchor for type II membrane protein transmembrane segment spans residues 7–23 (SWMLAALTLLVVFLIFA). Residues 24-375 (DISEIEEEIG…LTVGQCDGAT (352 aa)) are Lumenal-facing. 4 N-linked (GlcNAc...) asparagine glycosylation sites follow: Asn60, Asn72, Asn89, and Asn134. Disulfide bonds link Cys157–Cys307 and Cys171–Cys371. 2 residues coordinate CMP-N-acetyl-beta-neuraminate: Asn162 and Asn185. N-linked (GlcNAc...) asparagine glycosylation is found at Asn219 and Asn234. The CMP-N-acetyl-beta-neuraminate site is built by Thr294, Thr295, Gly296, Trp316, Tyr329, and His330. The Proton donor/acceptor role is filled by His346.

It belongs to the glycosyltransferase 29 family. In terms of processing, autopolysialylated. Autopolysialylation is not a prerequisite for the polysialylation acitity, but enhances the polysialylation acitity. In terms of tissue distribution, expressed only in newborn brain.

It localises to the golgi apparatus membrane. The protein resides in the secreted. It is found in the cell membrane. It carries out the reaction [N-acetyl-alpha-D-neuraminosyl-(2-&gt;8)](n) + CMP-N-acetyl-beta-neuraminate = [N-acetyl-alpha-D-neuraminosyl-(2-&gt;8)](n+1) + CMP + H(+). It participates in protein modification; protein glycosylation. Its function is as follows. Catalyzes the transfer of a sialic acid from a CMP-linked sialic acid donor onto a terminal alpha-2,3-, alpha-2,6-, or alpha-2,8-linked sialic acid of an N-linked glycan acceptor through alpha-2,8-linkages. Therefore, participates in polysialic acid synthesis on various sialylated N-acetyllactosaminyl oligosaccharides (alpha-2,3-, alpha-2,6-, or alpha-2,8-linked sialic acid), including NCAM1, NCAM1 N-glycans, FETUB N-glycans, and to a lesser extent sialylparagloboside (SPG) and AHSG, which does not require the initial addition of an alpha 2,8-sialic acid. However, does not exhibit sialic acid-polymerase activity. Catalyzes polysialic acid synthesis in the hippocampal on NCAM1 and supports neurite outgrowth. ST8SIA2-mediated polysialylation influences on oligodendrocyte differentiation and may promote the integrity of myelin and axons. This chain is Alpha-2,8-sialyltransferase 8B, found in Rattus norvegicus (Rat).